A 223-amino-acid polypeptide reads, in one-letter code: MTSEVIEDEKQFYSKAKTYWKEVPATVDGMLGGYGHISSIDINSSRKFLQRFLREGQNKTGTSYALDCGAGIGRITKRLLLPLFGVVDMVDVTEDFLVKAKTYLGEEGKRVRNFFCCGLQDFSPEPQSYDVIWIQWVIGHLTDQHLAEFLRRCKRGLRPNGIIVIKDNMAQEGVILDDVDSSVCRALDVVHRIVRSAGLSLLAQERQENLPDEIYHVYSLALR.

Position 1 is an N-acetylmethionine (Met-1). The residue at position 2 (Thr-2) is an N-acetylthreonine; in N-terminal Xaa-Pro-Lys N-methyltransferase 1, N-terminally processed. S-adenosyl-L-methionine is bound by residues Gly-69, Arg-74, 91-93 (DVT), 119-120 (LQ), and Gln-135.

This sequence belongs to the methyltransferase superfamily. NTM1 family.

The protein resides in the nucleus. The catalysed reaction is N-terminal L-alanyl-L-prolyl-L-lysyl-[protein] + 3 S-adenosyl-L-methionine = N-terminal N,N,N-trimethyl-L-alanyl-L-prolyl-L-lysyl-[protein] + 3 S-adenosyl-L-homocysteine + 3 H(+). It carries out the reaction N-terminal L-seryl-L-prolyl-L-lysyl-[protein] + 3 S-adenosyl-L-methionine = N-terminal N,N,N-trimethyl-L-seryl-L-prolyl-L-lysyl-[protein] + 3 S-adenosyl-L-homocysteine + 3 H(+). It catalyses the reaction N-terminal L-prolyl-L-prolyl-L-lysyl-[protein] + 2 S-adenosyl-L-methionine = N-terminal N,N-dimethyl-L-prolyl-L-prolyl-L-lysyl-[protein] + 2 S-adenosyl-L-homocysteine + 2 H(+). Distributive alpha-N-methyltransferase that methylates the N-terminus of target proteins containing the N-terminal motif [Ala/Gly/Pro/Ser]-Pro-Lys when the initiator Met is cleaved. Specifically catalyzes mono-, di- or tri-methylation of the exposed alpha-amino group of the Ala, Gly or Ser residue in the [Ala/Gly/Ser]-Pro-Lys motif and mono- or di-methylation of Pro in the Pro-Pro-Lys motif. Some of the substrates may be primed by NTMT2-mediated monomethylation. Catalyzes the trimethylation of the N-terminal Gly in CENPA (after removal of Met-1). Responsible for the N-terminal methylation of KLHL31, MYL2, MYL3, RB1, RCC1, RPL23A and SET. Required during mitosis for normal bipolar spindle formation and chromosome segregation via its action on RCC1. This is N-terminal Xaa-Pro-Lys N-methyltransferase 1 (NTMT1) from Bos taurus (Bovine).